The primary structure comprises 227 residues: DNA packaging ATPase P9 (227 aa).

16-23 contacts ATP; the sequence is GKTGTGKT.

As to quaternary structure, heterodimer of P6 and P9; further multimerizes as hexamers of heterodimers. Part of the dodecameric portal complex that is composed of the packaging efficiency factor P6, the DNA packaging ATPase P9, and the internal heterododecamer P20/P22 which spans the virion inner membrane.

Its subcellular location is the virion. In terms of biological role, together with the packaging efficiency factor P6, forms the external part of the portal vertex that is embeded in the capsid and which plays critical roles in genome packaging and genome ejection. Both proteins multimerize as a single ring-shaped heterdodecamer arranged around a central channel. This chain is DNA packaging ATPase P9 (IX), found in Enterobacteria phage PRD1 (Bacteriophage PRD1).